The chain runs to 101 residues: Putative fatty acid-binding protein 5-like protein 3 (101 aa).

Belongs to the calycin superfamily. Fatty-acid binding protein (FABP) family.

Functionally, high specificity for fatty acids. The chain is Putative fatty acid-binding protein 5-like protein 3 (FABP5P3) from Homo sapiens (Human).